The sequence spans 271 residues: 5-deoxy-glucuronate isomerase (271 aa).

Belongs to the isomerase IolB family.

The enzyme catalyses 5-deoxy-D-glucuronate = 5-dehydro-2-deoxy-D-gluconate. It functions in the pathway polyol metabolism; myo-inositol degradation into acetyl-CoA; acetyl-CoA from myo-inositol: step 4/7. Its function is as follows. Involved in the isomerization of 5-deoxy-glucuronate (5DG) to 5-dehydro-2-deoxy-D-gluconate (DKG or 2-deoxy-5-keto-D-gluconate). The sequence is that of 5-deoxy-glucuronate isomerase from Bacillus velezensis (strain DSM 23117 / BGSC 10A6 / LMG 26770 / FZB42) (Bacillus amyloliquefaciens subsp. plantarum).